The primary structure comprises 619 residues: UPF0329 protein ECU01_0100/ECU01_1510/ECU08_0030 (619 aa).

Residues 350–384 (REEREKREKREKREESKGRGKRGAGEAKEESKEED) are compositionally biased toward basic and acidic residues. Positions 350-428 (REEREKREKR…GKRKGDGHHY (79 aa)) are disordered. Residues 385 to 399 (GKEEEGVEAEEEESA) are compositionally biased toward acidic residues. Basic residues predominate over residues 411-428 (ARRKKSLKGKRKGDGHHY).

This sequence belongs to the UPF0329 family.

The polypeptide is UPF0329 protein ECU01_0100/ECU01_1510/ECU08_0030 (Encephalitozoon cuniculi (strain GB-M1) (Microsporidian parasite)).